The primary structure comprises 445 residues: Canavalin (445 aa).

The first 26 residues, 1 to 26 (MAFSARFPLWLLLGVVLLASVSASFA), serve as a signal peptide directing secretion. 2 Cupin type-1 domains span residues 49 to 207 (YLFR…DEIE) and 249 to 407 (FNLR…EEVE).

This sequence belongs to the 7S seed storage protein family. In terms of assembly, homotrimer.

In terms of biological role, seed storage protein. In Canavalia gladiata (Sword bean), this protein is Canavalin.